We begin with the raw amino-acid sequence, 446 residues long: Ribosomal protein uS12 methylthiotransferase RimO (446 aa).

An MTTase N-terminal domain is found at 9–121; sequence PKVGFVSLGC…VLDAIHAALP (113 aa). [4Fe-4S] cluster-binding residues include Cys-18, Cys-54, Cys-83, Cys-152, Cys-156, and Cys-159. The 238-residue stretch at 138–375 folds into the Radical SAM core domain; it reads LTPPHYAYLK…MAVQEAISRQ (238 aa). Residues 378–445 enclose the TRAM domain; that stretch reads QRRVGQRQRV…AHDLYGMVVS (68 aa).

The protein belongs to the methylthiotransferase family. RimO subfamily. The cofactor is [4Fe-4S] cluster.

Its subcellular location is the cytoplasm. The enzyme catalyses L-aspartate(89)-[ribosomal protein uS12]-hydrogen + (sulfur carrier)-SH + AH2 + 2 S-adenosyl-L-methionine = 3-methylsulfanyl-L-aspartate(89)-[ribosomal protein uS12]-hydrogen + (sulfur carrier)-H + 5'-deoxyadenosine + L-methionine + A + S-adenosyl-L-homocysteine + 2 H(+). Its function is as follows. Catalyzes the methylthiolation of an aspartic acid residue of ribosomal protein uS12. In Acidithiobacillus ferrooxidans (strain ATCC 23270 / DSM 14882 / CIP 104768 / NCIMB 8455) (Ferrobacillus ferrooxidans (strain ATCC 23270)), this protein is Ribosomal protein uS12 methylthiotransferase RimO.